The following is a 165-amino-acid chain: MSNTDAQTSFASLVVGPPVTDPINPLMGATSISPNLIELHGRKALVFAFGNLAVRAEGDFVLRYRVADILAGTGIDGVFPIQAICYGGPFHVFSTKDFPGYEASTELTKTLSVWGAQVNVREHRRRRRGKKDAAPAVTKPLYTTAPLDRDIVADSERRRRRRAGY.

One can recognise a Velvet domain in the interval 1-121; the sequence is MSNTDAQTSF…SVWGAQVNVR (121 aa).

Belongs to the velvet family.

It localises to the nucleus. Velvet-domain-containing protein that probably acts as a positive regulator of sexual development. The chain is Probable velvet family sexual development regulator CC1G_12219 from Coprinopsis cinerea (strain Okayama-7 / 130 / ATCC MYA-4618 / FGSC 9003) (Inky cap fungus).